A 382-amino-acid chain; its full sequence is Small ribosomal subunit protein bS1 homolog (382 aa).

4 S1 motif domains span residues 18 to 85 (GDVV…LSKR), 103 to 168 (GHVF…LSHK), 189 to 257 (GDVV…LSIK), and 274 to 343 (GDIR…LSIK). Phosphoserine is present on S244.

It belongs to the bacterial ribosomal protein bS1 family.

This Bacillus cereus (strain ATCC 10987 / NRS 248) protein is Small ribosomal subunit protein bS1 homolog.